The following is a 535-amino-acid chain: Bifunctional purine biosynthesis protein PurH (535 aa).

The region spanning 6-151 is the MGS-like domain; that stretch reads TRLPVRRALI…KNHKDVAIVV (146 aa).

The protein belongs to the PurH family.

The enzyme catalyses (6R)-10-formyltetrahydrofolate + 5-amino-1-(5-phospho-beta-D-ribosyl)imidazole-4-carboxamide = 5-formamido-1-(5-phospho-D-ribosyl)imidazole-4-carboxamide + (6S)-5,6,7,8-tetrahydrofolate. It carries out the reaction IMP + H2O = 5-formamido-1-(5-phospho-D-ribosyl)imidazole-4-carboxamide. It functions in the pathway purine metabolism; IMP biosynthesis via de novo pathway; 5-formamido-1-(5-phospho-D-ribosyl)imidazole-4-carboxamide from 5-amino-1-(5-phospho-D-ribosyl)imidazole-4-carboxamide (10-formyl THF route): step 1/1. It participates in purine metabolism; IMP biosynthesis via de novo pathway; IMP from 5-formamido-1-(5-phospho-D-ribosyl)imidazole-4-carboxamide: step 1/1. This Pseudomonas putida (strain GB-1) protein is Bifunctional purine biosynthesis protein PurH.